The primary structure comprises 207 residues: Dephospho-CoA kinase (207 aa).

The DPCK domain occupies 10-207; the sequence is ILGLTGGIGS…FYLTLRGGQS (198 aa). ATP is bound at residue 18-23; the sequence is GSGKSA.

This sequence belongs to the CoaE family.

It is found in the cytoplasm. The enzyme catalyses 3'-dephospho-CoA + ATP = ADP + CoA + H(+). Its pathway is cofactor biosynthesis; coenzyme A biosynthesis; CoA from (R)-pantothenate: step 5/5. In terms of biological role, catalyzes the phosphorylation of the 3'-hydroxyl group of dephosphocoenzyme A to form coenzyme A. This chain is Dephospho-CoA kinase, found in Pseudomonas syringae pv. tomato (strain ATCC BAA-871 / DC3000).